The following is a 422-amino-acid chain: Killer cell immunoglobulin-like receptor 3DL1 (422 aa).

The N-terminal stretch at 1–21 (MMFEFLSLLCSGFFLVQRMSA) is a signal peptide. Topologically, residues 22–329 (HMGSYDKPFL…KNLHIQIGLL (308 aa)) are extracellular. 3 Ig-like C2-type domains span residues 42-100 (GQNV…HHQY), 135-202 (GENV…YNHS), and 237-300 (EQNM…FKNS). Asparagine 44 carries N-linked (GlcNAc...) asparagine glycosylation. A disulfide bridge connects residues cysteine 49 and cysteine 95. Asparagine 137 carries N-linked (GlcNAc...) asparagine glycosylation. A disulfide bond links cysteine 142 and cysteine 195. N-linked (GlcNAc...) asparagine glycans are attached at residues asparagine 200 and asparagine 239. An intrachain disulfide couples cysteine 244 to cysteine 293. N-linked (GlcNAc...) asparagine glycosylation occurs at asparagine 299. A helical transmembrane segment spans residues 330-350 (VTMVLVIVVIIIIIIIIIIII). At 351–422 (YYYYFSKKSS…DTVVYTEVMI (72 aa)) the chain is on the cytoplasmic side.

It belongs to the immunoglobulin superfamily.

Its subcellular location is the cell membrane. Its function is as follows. Receptor on natural killer (NK) cells. Inhibits the activity of NK cells thus preventing cell lysis. This Rattus norvegicus (Rat) protein is Killer cell immunoglobulin-like receptor 3DL1 (Kir3dl1).